The sequence spans 142 residues: Arginine decarboxylase proenzyme (142 aa).

The active-site Schiff-base intermediate with substrate; via pyruvic acid is S81. A Pyruvic acid (Ser); by autocatalysis modification is found at S81. Catalysis depends on H86, which acts as the Proton acceptor; for processing activity. Catalysis depends on C101, which acts as the Proton donor; for catalytic activity.

The protein belongs to the prokaryotic AdoMetDC family. Type 1 subfamily. As to quaternary structure, heterooctamer of four alpha and four beta chains arranged as a tetramer of alpha/beta heterodimers. Pyruvate serves as cofactor. In terms of processing, is synthesized initially as an inactive proenzyme. Formation of the active enzyme involves a self-maturation process in which the active site pyruvoyl group is generated from an internal serine residue via an autocatalytic post-translational modification. Two non-identical subunits are generated from the proenzyme in this reaction, and the pyruvate is formed at the N-terminus of the alpha chain, which is derived from the carboxyl end of the proenzyme. The post-translation cleavage follows an unusual pathway, termed non-hydrolytic serinolysis, in which the side chain hydroxyl group of the serine supplies its oxygen atom to form the C-terminus of the beta chain, while the remainder of the serine residue undergoes an oxidative deamination to produce ammonia and the pyruvoyl group blocking the N-terminus of the alpha chain.

It catalyses the reaction L-arginine + H(+) = agmatine + CO2. It participates in amine and polyamine biosynthesis; agmatine biosynthesis; agmatine from L-arginine: step 1/1. Specifically catalyzes the decarboxylation of L-arginine to agmatine. Has no S-adenosylmethionine decarboxylase (AdoMetDC) activity. In Hyperthermus butylicus (strain DSM 5456 / JCM 9403 / PLM1-5), this protein is Arginine decarboxylase proenzyme.